We begin with the raw amino-acid sequence, 630 residues long: Sorting nexin-4 (630 aa).

2 stretches are compositionally biased toward polar residues: residues 1 to 11 (MSSEDQFTSIQ) and 19 to 28 (NTNNTPTDTT). Positions 1–143 (MSSEDQFTSI…QQPQQQLASI (143 aa)) are disordered. Positions 32–49 (KSSKSKKSKKSSSKKKNG) are enriched in basic residues. Positions 50-60 (NKISPSSTTET) are enriched in low complexity. The span at 81–94 (DDNHEVDDGNKEQN) shows a compositional bias: basic and acidic residues. The segment covering 130 to 143 (QQQLQQPQQQLASI) has biased composition (low complexity). A PX domain is found at 187–321 (SIKTTVTHPN…HLFISNSNDW (135 aa)). A 1,2-diacyl-sn-glycero-3-phospho-(1D-myo-inositol-3-phosphate) is bound by residues Arg243, Lys269, and Arg288. Coiled coils occupy residues 361-413 (SKHK…SNQI) and 550-581 (TIKS…INEE).

It belongs to the sorting nexin family.

It localises to the cytoplasm. Its subcellular location is the cytosol. The protein resides in the preautophagosomal structure membrane. It is found in the endosome membrane. Functionally, sorting nexin, involved in the separation or division of vacuoles throughout the entire life cycle of the cells. Involved in retrieval of late-Golgi SNAREs from post-Golgi endosomes to the trans-Golgi network, for cytoplasm to vacuole transport (Cvt), and autophagy of large cargos including mitophagy, pexophagy and glycophagy. The chain is Sorting nexin-4 (SNX4) from Candida albicans (strain SC5314 / ATCC MYA-2876) (Yeast).